Consider the following 471-residue polypeptide: NADH-quinone oxidoreductase subunit N 1 (471 aa).

14 helical membrane passes run 11–31 (ALVPEITLLVSAVTGLLAGAW), 39–59 (TIHVLAALATVVGLVATALAA), 81–101 (AIVLVAVLALIALSRDTVAGH), 105–125 (TEFVVLLQLGALGSIALAGAG), 127–147 (LIMLFAAFLLASVPFYALAGW), 162–182 (LAGALAGVTTAAGVTILFGVA), 200–220 (AAAAVGLIAVLAGLAFKAGAV), 234–254 (PPPVAAALTTVPKIGALVAFY), 270–290 (LITAVLATAGMTLGNLAAFAQ), 296–316 (MLGYSTVSQVGYLLMAVAVAG), 324–344 (ALLLYLAAYALTNIAGFAVVA), 365–385 (ALALTVALLGLVGTPPTAVFV), 398–418 (GLAWLVVIAALNTLASLFYYL), and 444–464 (AVALTTAALTLLLGIGSGIVL).

Belongs to the complex I subunit 2 family. As to quaternary structure, NDH-1 is composed of 14 different subunits. Subunits NuoA, H, J, K, L, M, N constitute the membrane sector of the complex.

It is found in the cell membrane. The catalysed reaction is a quinone + NADH + 5 H(+)(in) = a quinol + NAD(+) + 4 H(+)(out). Functionally, NDH-1 shuttles electrons from NADH, via FMN and iron-sulfur (Fe-S) centers, to quinones in the respiratory chain. The immediate electron acceptor for the enzyme in this species is believed to be a menaquinone. Couples the redox reaction to proton translocation (for every two electrons transferred, four hydrogen ions are translocated across the cytoplasmic membrane), and thus conserves the redox energy in a proton gradient. This chain is NADH-quinone oxidoreductase subunit N 1, found in Streptomyces griseus subsp. griseus (strain JCM 4626 / CBS 651.72 / NBRC 13350 / KCC S-0626 / ISP 5235).